The chain runs to 511 residues: ATP synthase subunit alpha (511 aa).

Residue 169-176 (GDRKTGKT) coordinates ATP.

Belongs to the ATPase alpha/beta chains family. As to quaternary structure, F-type ATPases have 2 components, CF(1) - the catalytic core - and CF(0) - the membrane proton channel. CF(1) has five subunits: alpha(3), beta(3), gamma(1), delta(1), epsilon(1). CF(0) has three main subunits: a(1), b(2) and c(9-12). The alpha and beta chains form an alternating ring which encloses part of the gamma chain. CF(1) is attached to CF(0) by a central stalk formed by the gamma and epsilon chains, while a peripheral stalk is formed by the delta and b chains.

It is found in the cell membrane. It carries out the reaction ATP + H2O + 4 H(+)(in) = ADP + phosphate + 5 H(+)(out). In terms of biological role, produces ATP from ADP in the presence of a proton gradient across the membrane. The alpha chain is a regulatory subunit. This chain is ATP synthase subunit alpha, found in Latilactobacillus sakei subsp. sakei (strain 23K) (Lactobacillus sakei subsp. sakei).